Here is a 167-residue protein sequence, read N- to C-terminus: Intermembrane phospholipid transport system binding protein MlaD (167 aa).

Residues 1–6 (MRQTIK) are Cytoplasmic-facing. Residues 7 to 27 (YEFWVGLFLLLGIGALVFLGL) traverse the membrane as a helical; Signal-anchor for type II membrane protein segment. At 28–167 (RVANVQGFAE…GNEKSESTEQ (140 aa)) the chain is on the periplasmic side. Residues 40-118 (SYTVTATFDN…GEQYIALTMG (79 aa)) form an MCE/MlaD region.

It belongs to the MlaD family. The complex is composed of two ATP-binding proteins (MlaF), two transmembrane proteins (MlaE), two cytoplasmic solute-binding proteins (MlaB) and six periplasmic solute-binding proteins (MlaD).

The protein localises to the cell inner membrane. Its function is as follows. Part of the ABC transporter complex MlaFEDB, which is involved in a phospholipid transport pathway that maintains lipid asymmetry in the outer membrane by retrograde trafficking of phospholipids from the outer membrane to the inner membrane. MlaD functions in substrate binding with strong affinity for phospholipids and modulates ATP hydrolytic activity of the complex. This Haemophilus influenzae (strain ATCC 51907 / DSM 11121 / KW20 / Rd) protein is Intermembrane phospholipid transport system binding protein MlaD.